The following is a 207-amino-acid chain: MVLIIRPSQTLILFRKAMLKPIGRYPLKRNFFGLSGTNHTIREQRYVLRKAINAPPSTVYAAVSEVAQYKEFIPYCVDSFVDKRNPVDNKPLIAGLRVGFKQYDEEFICNVTCKDTDHTYTVVAETISHNLFHLLISKWTIMPHPNRPNAAMVELLLRFKFKSRIYNSVSLIFAKTVTELVMNAFAKRAYHLVRLAMLKPSSKEGSP.

The transit peptide at 1–39 directs the protein to the mitochondrion; that stretch reads MVLIIRPSQTLILFRKAMLKPIGRYPLKRNFFGLSGTNH.

It belongs to the COQ10 family. In terms of assembly, interacts with coenzyme Q.

The protein localises to the mitochondrion inner membrane. Functionally, required for the function of coenzyme Q in the respiratory chain. May serve as a chaperone or may be involved in the transport of Q6 from its site of synthesis to the catalytic sites of the respiratory complexes. The polypeptide is Coenzyme Q-binding protein COQ10, mitochondrial (COQ10) (Saccharomyces cerevisiae (strain ATCC 204508 / S288c) (Baker's yeast)).